The chain runs to 2230 residues: Golgin subfamily A member 4 (2230 aa).

The segment at 1 to 64 is disordered; the sequence is MFKKLKQKIS…SGDTQSFAQK (64 aa). Serine 10 carries the post-translational modification Phosphoserine. Positions 12–41 are enriched in low complexity; the sequence is EQQQLQQALAPAQASSNSSTPTRMRSRTSS. Threonine 39 carries the phosphothreonine modification. A phosphoserine mark is found at serine 41, serine 71, serine 78, and serine 89. Residues 87–107 are compositionally biased toward basic and acidic residues; the sequence is SSSKESLVRTSSRESLNRLDL. The interval 87–127 is disordered; the sequence is SSSKESLVRTSSRESLNRLDLDSSTASFDPPSDMDSEAEDL. Positions 133-203 are interaction with MACF1; it reads SLNKEQLIQR…EELQMDQQAK (71 aa). Positions 133–2185 form a coiled coil; it reads SLNKEQLIQR…EYLRKVLFEY (2053 aa). The residue at position 266 (serine 266) is a Phosphoserine. 2 N-linked (GlcNAc...) asparagine glycosylation sites follow: asparagine 585 and asparagine 1612. One can recognise a GRIP domain in the interval 2168-2215; that stretch reads LFGEPTEFEYLRKVLFEYMMGRETKTMAKVITTVLKFPDDQTQKILER. At threonine 2223 the chain carries Phosphothreonine.

In terms of assembly, homodimer. Interacts with RAB6A. Interacts with GTP-bound ARL1 and ARL3. Interacts with MACF1. Directly interacts with TBC1D23. Interacts with FAM91A1; this interaction may be mediated by TBC1D23.

Its subcellular location is the cytoplasm. The protein localises to the golgi apparatus membrane. It is found in the golgi apparatus. The protein resides in the trans-Golgi network membrane. Functionally, involved in vesicular trafficking at the Golgi apparatus level. May play a role in delivery of transport vesicles containing GPI-linked proteins from the trans-Golgi network through its interaction with MACF1. Involved in endosome-to-Golgi trafficking. This is Golgin subfamily A member 4 (GOLGA4) from Homo sapiens (Human).